A 261-amino-acid chain; its full sequence is Cytochrome c oxidase subunit 3 (261 aa).

Residues 1–15 are Mitochondrial matrix-facing; the sequence is MAHQAHAYHMVDPSP. Residues 16–34 form a helical membrane-spanning segment; the sequence is WPLTGAVAALLMSSGLAIW. The Mitochondrial intermembrane segment spans residues 35–40; sequence FHLHSM. The chain crosses the membrane as a helical span at residues 41–66; sequence TLIVLGMILLILTMIQWWRDIIREGT. Residues 67–72 lie on the Mitochondrial matrix side of the membrane; sequence FQGHHT. The chain crosses the membrane as a helical span at residues 73 to 105; the sequence is PPVQKGLRYGMILFITSEVFFFLGFFWAFYHSS. Topologically, residues 106–128 are mitochondrial intermembrane; that stretch reads LAPTPELGGCWPPTGLTTLDPFE. Residues 129–152 traverse the membrane as a helical segment; that stretch reads VPLLNTAVLLASGVTVTWAHHSLM. At 153 to 155 the chain is on the mitochondrial matrix side; sequence EGE. The chain crosses the membrane as a helical span at residues 156–183; sequence RKQAIQSLALTILLGLYFTALQAMEYYE. Residues 184–190 lie on the Mitochondrial intermembrane side of the membrane; it reads APFTIAD. A helical membrane pass occupies residues 191-223; it reads GVYGSTFFVATGFHGLHVIIGSTFLAVCLLRQV. At 224 to 232 the chain is on the mitochondrial matrix side; it reads LFHFTSDHH. A helical membrane pass occupies residues 233-256; it reads FGFEAAAWYWHFVDVVWLFLYVSI. Over 257 to 261 the chain is Mitochondrial intermembrane; that stretch reads YWWGS.

It belongs to the cytochrome c oxidase subunit 3 family. Component of the cytochrome c oxidase (complex IV, CIV), a multisubunit enzyme composed of 14 subunits. The complex is composed of a catalytic core of 3 subunits MT-CO1, MT-CO2 and MT-CO3, encoded in the mitochondrial DNA, and 11 supernumerary subunits COX4I, COX5A, COX5B, COX6A, COX6B, COX6C, COX7A, COX7B, COX7C, COX8 and NDUFA4, which are encoded in the nuclear genome. The complex exists as a monomer or a dimer and forms supercomplexes (SCs) in the inner mitochondrial membrane with NADH-ubiquinone oxidoreductase (complex I, CI) and ubiquinol-cytochrome c oxidoreductase (cytochrome b-c1 complex, complex III, CIII), resulting in different assemblies (supercomplex SCI(1)III(2)IV(1) and megacomplex MCI(2)III(2)IV(2)).

It localises to the mitochondrion inner membrane. The enzyme catalyses 4 Fe(II)-[cytochrome c] + O2 + 8 H(+)(in) = 4 Fe(III)-[cytochrome c] + 2 H2O + 4 H(+)(out). Component of the cytochrome c oxidase, the last enzyme in the mitochondrial electron transport chain which drives oxidative phosphorylation. The respiratory chain contains 3 multisubunit complexes succinate dehydrogenase (complex II, CII), ubiquinol-cytochrome c oxidoreductase (cytochrome b-c1 complex, complex III, CIII) and cytochrome c oxidase (complex IV, CIV), that cooperate to transfer electrons derived from NADH and succinate to molecular oxygen, creating an electrochemical gradient over the inner membrane that drives transmembrane transport and the ATP synthase. Cytochrome c oxidase is the component of the respiratory chain that catalyzes the reduction of oxygen to water. Electrons originating from reduced cytochrome c in the intermembrane space (IMS) are transferred via the dinuclear copper A center (CU(A)) of subunit 2 and heme A of subunit 1 to the active site in subunit 1, a binuclear center (BNC) formed by heme A3 and copper B (CU(B)). The BNC reduces molecular oxygen to 2 water molecules using 4 electrons from cytochrome c in the IMS and 4 protons from the mitochondrial matrix. The sequence is that of Cytochrome c oxidase subunit 3 (mt-co3) from Danio rerio (Zebrafish).